The primary structure comprises 531 residues: SWI/SNF-related matrix-associated actin-dependent regulator of chromatin subfamily D member 2 (531 aa).

Residues 20–85 are disordered; that stretch reads AVAAALGAPP…MSPGSRMPMA (66 aa). Low complexity predominate over residues 34–45; that stretch reads PGMLPNPALRGP. Asymmetric dimethylarginine is present on residues arginine 81 and arginine 104. The tract at residues 202–226 is disordered; the sequence is FSPSKADGDNSGTAGTPGGTPAADK. Serine 203 carries the phosphoserine modification. Threonine 217 bears the Phosphothreonine mark. A Glycyl lysine isopeptide (Lys-Gly) (interchain with G-Cter in SUMO2) cross-link involves residue lysine 226. An SWIB/MDM2 domain is found at 306–383; it reads HQPPQYKLDP…PMKLAGLLQH (78 aa).

This sequence belongs to the SMARCD family. In terms of assembly, component of the multiprotein chromatin-remodeling complexes SWI/SNF: SWI/SNF-A (BAF), SWI/SNF-B (PBAF) and related complexes. The canonical complex contains a catalytic subunit (either SMARCA4/BRG1/BAF190A or SMARCA2/BRM/BAF190B), and at least SMARCE1, ACTL6A/BAF53, SMARCC1/BAF155, SMARCC2/BAF170, and SMARCB1/SNF5/BAF47. Other subunits specific to each of the complexes may also be present permitting several possible combinations developmentally and tissue specific. Component of the BAF complex, which includes at least actin (ACTB), ARID1A/BAF250A, ARID1B/BAF250B, SMARCA2/BRM, SMARCA4/BRG1, ACTL6A/BAF53, ACTL6B/BAF53B, SMARCE1/BAF57, SMARCC1/BAF155, SMARCC2/BAF170, SMARCB1/SNF5/INI1, and one or more SMARCD1/BAF60A, SMARCD2/BAF60B, or SMARCD3/BAF60C. In muscle cells, the BAF complex also contains DPF3. Component of the SWI/SNF-B (PBAF) chromatin remodeling complex, at least composed of SMARCA4/BRG1, SMARCB1/BAF47/SNF5, ACTL6A/BAF53A or ACTL6B/BAF53B, SMARCE1/BAF57, SMARCD1/BAF60A, SMARCD2/BAF60B, perhaps SMARCD3/BAF60C, SMARCC1/BAF155, SMARCC2/BAF170, PBRM1/BAF180, ARID2/BAF200 and actin (ACTB). Interacts with UNKL. Interacts with CEBPE. In terms of processing, ubiquitinated through a signaling process involving RAC1 and the RING finger protein UNKL.

Its subcellular location is the nucleus. Functionally, involved in transcriptional activation and repression of select genes by chromatin remodeling (alteration of DNA-nucleosome topology). Component of SWI/SNF chromatin remodeling complexes that carry out key enzymatic activities, changing chromatin structure by altering DNA-histone contacts within a nucleosome in an ATP-dependent manner. Critical regulator of myeloid differentiation, controlling granulocytopoiesis and the expression of genes involved in neutrophil granule formation. The sequence is that of SWI/SNF-related matrix-associated actin-dependent regulator of chromatin subfamily D member 2 (Smarcd2) from Rattus norvegicus (Rat).